Here is a 146-residue protein sequence, read N- to C-terminus: Hemoglobin subunit beta (146 aa).

An N-acetylvaline modification is found at Val1. Positions 2 to 146 (HLTAEEKAAV…VANALAHKYH (145 aa)) constitute a Globin domain. Thr12 is subject to Phosphothreonine. At Ser44 the chain carries Phosphoserine. Lys59 carries the N6-acetyllysine modification. His63 contacts heme b. Lys82 carries the post-translational modification N6-acetyllysine. Residue His92 participates in heme b binding. S-nitrosocysteine is present on Cys93. An N6-acetyllysine modification is found at Lys144.

This sequence belongs to the globin family. In terms of assembly, heterotetramer of two alpha chains and two beta chains. Red blood cells.

Involved in oxygen transport from the lung to the various peripheral tissues. The protein is Hemoglobin subunit beta (HBB) of Mellivora capensis (Ratel).